Here is a 342-residue protein sequence, read N- to C-terminus: Platelet-activating factor receptor (342 aa).

The Extracellular segment spans residues 1–16 (MELNSSSRVDSEFRYT). Asparagine 4 is a glycosylation site (N-linked (GlcNAc...) asparagine). Residues 17-38 (LFPIVYSIIFVLGIIANGYVLW) traverse the membrane as a helical segment. At 39-54 (VFARLYPSKKLNEIKI) the chain is on the cytoplasmic side. The chain crosses the membrane as a helical span at residues 55–74 (FMVNLTVADLLFLITLPLWI). At 75 to 91 (VYYSNQGNWFLPKFLCN) the chain is on the extracellular side. A disulfide bond links cysteine 90 and cysteine 173. The helical transmembrane segment at 92-113 (LAGCLFFINTYCSVAFLGVITY) threads the bilayer. The Cytoplasmic segment spans residues 114 to 133 (NRFQAVKYPIKTAQATTRKR). A helical transmembrane segment spans residues 134 to 155 (GIALSLVIWVAIVAAASYFLVM). Over 156 to 184 (DSTNVVSNKAGSGNITRCFEHYEKGSKPV) the chain is Extracellular. Asparagine 169 carries N-linked (GlcNAc...) asparagine glycosylation. Residues 185–205 (LIIHICIVLGFFIVFLLILFC) form a helical membrane-spanning segment. The Cytoplasmic portion of the chain corresponds to 206 to 233 (NLVIIHTLLRQPVKQQRNAEVRRRALWM). Residues 234-254 (VCTVLAVFVICFVPHHMVQLP) form a helical membrane-spanning segment. Over 255–276 (WTLAELGMWPSSNHQAINDAHQ) the chain is Extracellular. A helical transmembrane segment spans residues 277-296 (VTLCLLSTNCVLDPVIYCFL). The Cytoplasmic segment spans residues 297–342 (TKKFRKHLSEKLNIMRSSQKCSRVTTDTGTEMAIPINHTPVNPIKN).

It belongs to the G-protein coupled receptor 1 family. Interacts with ARRB1.

The protein localises to the cell membrane. Receptor for platelet activating factor, a chemotactic phospholipid mediator that possesses potent inflammatory, smooth-muscle contractile and hypotensive activity. Seems to mediate its action via a G protein that activates a phosphatidylinositol-calcium second messenger system. This Cavia porcellus (Guinea pig) protein is Platelet-activating factor receptor (PTAFR).